Here is a 760-residue protein sequence, read N- to C-terminus: Heat shock transcription factor (760 aa).

2 disordered regions span residues 1–132 (MIMN…PPVV) and 206–276 (FHPL…GPKT). 2 stretches are compositionally biased toward polar residues: residues 19 to 31 (TESN…SSPS) and 38 to 88 (RSGT…SNKL). Positions 119–130 (DYKDSIDLDKPP) are enriched in basic and acidic residues. Positions 221–247 (AGPANNSQQQQQQQQQDSSIPSDGISS) are enriched in low complexity. The DNA-binding element occupies 276–385 (TRPAFVMKIW…EDLLDKIVRN (110 aa)). Residues 414–467 (ELETIKMNQYVISEDLRRVRQDNKMLWQENYLNRERNQVQGRTLDKILKFLSVV) form an involved in trimerization region. 4 disordered regions span residues 492–545 (TQYR…NNNN), 560–582 (LTNR…EGSI), 609–630 (HQPG…SAPS), and 674–760 (QEQH…VSDH). A compositionally biased stretch (polar residues) spans 515 to 539 (NSRFARDNNQTAQPTYESPLSTSDT). S570 is modified (phosphoserine). T574 is modified (phosphothreonine). S576 is subject to Phosphoserine. Phosphothreonine is present on T577. Residues 613-628 (ATTNNNNHSSSTAISA) show a composition bias toward low complexity. The stretch at 646 to 684 (RNLDDLEKHINKEGQSIQQVQDWIDKLAQEQHEKQQQQQ) forms a coiled coil. Composition is skewed to polar residues over residues 701–722 (ATTT…NISF) and 731–742 (PGSNVSSNINDS). A compositionally biased stretch (basic and acidic residues) spans 744-760 (GNEKKSKKRSIEEVSDH).

The protein belongs to the HSF family. In terms of assembly, homotrimer. Homotrimerization increases the affinity of HSF1 to DNA. Interacts with HSP90. Activated by phosphorylation of at least Ser-570, Thr-574, Ser-576 and Thr-577 in response to heat shock. Additional unidentified residues are also phosphorylated in response to heat shock.

It is found in the nucleus. In terms of biological role, DNA-binding transcription factor that specifically binds heat shock promoter elements (HSE) and activates transcription. With HSP90, is required for the modulation of the chaperone levels in response to growth temperature, rather than the activation of acute responses to sudden thermal transitions. Activated during infection and contributes to full virulence. In Candida albicans (strain SC5314 / ATCC MYA-2876) (Yeast), this protein is Heat shock transcription factor.